We begin with the raw amino-acid sequence, 301 residues long: Sulfate adenylyltransferase subunit 2 1 (301 aa).

This sequence belongs to the PAPS reductase family. CysD subfamily. Heterodimer composed of CysD, the smaller subunit, and CysN.

It catalyses the reaction sulfate + ATP + H(+) = adenosine 5'-phosphosulfate + diphosphate. The protein operates within sulfur metabolism; hydrogen sulfide biosynthesis; sulfite from sulfate: step 1/3. In terms of biological role, with CysN forms the ATP sulfurylase (ATPS) that catalyzes the adenylation of sulfate producing adenosine 5'-phosphosulfate (APS) and diphosphate, the first enzymatic step in sulfur assimilation pathway. APS synthesis involves the formation of a high-energy phosphoric-sulfuric acid anhydride bond driven by GTP hydrolysis by CysN coupled to ATP hydrolysis by CysD. This chain is Sulfate adenylyltransferase subunit 2 1, found in Shewanella sediminis (strain HAW-EB3).